The primary structure comprises 80 residues: MNQHVKVTFDFTNYNYGTYDLAVPAYLPIKNLIALVLDSLDISIFDVNTQIKVMTKGQLLVENDRLIDYQIADGDILKLL.

The protein belongs to the EsaB family.

It localises to the cytoplasm. Seems to regulate secreted factors that contribute to the establishment of persistent infections in the host. This is Type VII secretion system accessory factor EsaB from Staphylococcus aureus (strain COL).